Here is a 123-residue protein sequence, read N- to C-terminus: uncharacterized protein (123 aa).

Positions 1-24 (MLPLCLTFLSFFLSLGGSFKAVMT) are cleaved as a signal peptide. 2 helical membrane passes run 39 to 59 (FWIF…ALAI) and 101 to 121 (FGGI…ALTG).

It is found in the membrane. This is an uncharacterized protein from Saccharomyces cerevisiae (strain ATCC 204508 / S288c) (Baker's yeast).